Consider the following 599-residue polypeptide: Spermatogenesis-associated protein 7 (599 aa).

Residues 163–205 (KSSKVITNGPEKNSSSSPSSVDYAASGPRKLSSGALYGRRPRS) are disordered. Over residues 166–175 (KVITNGPEKN) the composition is skewed to polar residues.

In terms of assembly, found in a complex with CFAP410, NEK1 and SPATA7. Interacts with NEK1. Interacts with RPGRIP1. Interacts with RPGR. Interacts with NPHP4. Interacts with NPHP1. Interacts with AHI1.

The protein resides in the cytoplasm. The protein localises to the cytoskeleton. It localises to the cilium axoneme. It is found in the cilium basal body. Its subcellular location is the cell projection. The protein resides in the cilium. The protein localises to the photoreceptor outer segment. In terms of biological role, involved in the maintenance of both rod and cone photoreceptor cells. It is required for recruitment and proper localization of RPGRIP1 to the photoreceptor connecting cilium (CC), as well as photoreceptor-specific localization of proximal CC proteins at the distal CC. Maintenance of protein localization at the photoreceptor-specific distal CC is essential for normal microtubule stability and to prevent photoreceptor degeneration. The sequence is that of Spermatogenesis-associated protein 7 (SPATA7) from Homo sapiens (Human).